Here is a 548-residue protein sequence, read N- to C-terminus: Ran-binding protein 9 (548 aa).

The interval 1–23 (MSSPPLHGLSSVGHLSRDPPPRS) is disordered. Positions 2–189 (SSPPLHGLSS…VDANFGQSPF (188 aa)) constitute a B30.2/SPRY domain. Residues 217-249 (WQSMIQRMVSSYLVHHGYCSTAEAFAKSTDQTV) form the LisH domain. Positions 255–312 (SIKNRQRIQKLVLSGRMGEAIETTQQLYPSLLERNPNLLFTLKVRQFIEMVNGTDSEV) constitute a CTLH domain.

The protein belongs to the RANBP9/10 family. As to quaternary structure, identified in the CTLH complex that contains at least MAEA, RMND5A (or alternatively its paralog RMND5B), GID8, WDR26, and RANBP9 and/or RANBP10.

The protein resides in the cytoplasm. It is found in the cell membrane. Its subcellular location is the nucleus. In terms of biological role, may act as scaffolding protein, and as adapter protein to couple membrane receptors to intracellular signaling pathways. Acts as a mediator of cell spreading and actin cytoskeleton rearrangement. Core component of the CTLH E3 ubiquitin-protein ligase complex that mediates ubiquitination and subsequent proteasomal degradation of target proteins. In Xenopus laevis (African clawed frog), this protein is Ran-binding protein 9 (ranbp9).